Reading from the N-terminus, the 338-residue chain is Ketol-acid reductoisomerase (NADP(+)) (338 aa).

One can recognise a KARI N-terminal Rossmann domain in the interval 1–181 (MKVFYDNDAD…GGTRAGVIET (181 aa)). Residues 24 to 27 (YGSQ), arginine 47, serine 50, serine 52, and 82 to 85 (DEGQ) each bind NADP(+). Histidine 107 is a catalytic residue. Glycine 133 lines the NADP(+) pocket. The region spanning 182–327 (SFREETETDL…SKLRSMMTWI (146 aa)) is the KARI C-terminal knotted domain. Residues aspartate 190, glutamate 194, glutamate 226, and glutamate 230 each coordinate Mg(2+). Position 251 (serine 251) interacts with substrate.

It belongs to the ketol-acid reductoisomerase family. The cofactor is Mg(2+).

It catalyses the reaction (2R)-2,3-dihydroxy-3-methylbutanoate + NADP(+) = (2S)-2-acetolactate + NADPH + H(+). It carries out the reaction (2R,3R)-2,3-dihydroxy-3-methylpentanoate + NADP(+) = (S)-2-ethyl-2-hydroxy-3-oxobutanoate + NADPH + H(+). Its pathway is amino-acid biosynthesis; L-isoleucine biosynthesis; L-isoleucine from 2-oxobutanoate: step 2/4. The protein operates within amino-acid biosynthesis; L-valine biosynthesis; L-valine from pyruvate: step 2/4. Its function is as follows. Involved in the biosynthesis of branched-chain amino acids (BCAA). Catalyzes an alkyl-migration followed by a ketol-acid reduction of (S)-2-acetolactate (S2AL) to yield (R)-2,3-dihydroxy-isovalerate. In the isomerase reaction, S2AL is rearranged via a Mg-dependent methyl migration to produce 3-hydroxy-3-methyl-2-ketobutyrate (HMKB). In the reductase reaction, this 2-ketoacid undergoes a metal-dependent reduction by NADPH to yield (R)-2,3-dihydroxy-isovalerate. This is Ketol-acid reductoisomerase (NADP(+)) from Acidithiobacillus ferrooxidans (strain ATCC 23270 / DSM 14882 / CIP 104768 / NCIMB 8455) (Ferrobacillus ferrooxidans (strain ATCC 23270)).